The primary structure comprises 48 residues: M-oxotoxin-Ot1a (48 aa).

As to expression, expressed by the venom gland.

The protein resides in the secreted. It is found in the target cell membrane. Its function is as follows. Disrupts cell membranes, particularly those rich in phosphocholine, through formation of pores. Has antimicrobial activity against Gram-negative bacterium E.coli, Gram-positive bacteria B.subtilis and S.aureus, and hemolytic activity against sheep, pig and guinea pig erythrocytes. Has insecticidal activity against S.frugiperda ovarian cells by opening non-selective ion channels. Enhances the insecticidal activity of spider venom neurotoxic peptides. This chain is M-oxotoxin-Ot1a, found in Oxyopes takobius (Lynx spider).